The sequence spans 1213 residues: Oligopeptidase PhomG' (1213 aa).

Histidine 447 lines the Zn(2+) pocket. Glutamate 448 is a catalytic residue. Zn(2+) contacts are provided by histidine 451 and histidine 454.

This sequence belongs to the peptidase M3 family. As to quaternary structure, monomer. The cofactor is Zn(2+).

Its pathway is mycotoxin biosynthesis. Its function is as follows. Oligopeptidase; part of the gene cluster that mediates the biosynthesis of the phomopsins, a group of hexapeptide mycotoxins which infects lupins and causes lupinosis disease in livestock. Within the pathway, phomG and phomG' are probably involved in the processing of the phomA and phomA' precursors. The pathway starts with the processing of the precursor phomA by several endopeptidases including kexin proteases as well as the cluster-specific S41 family peptidase phomP1 and the oligopeptidase phomG to produce 10 identical copies of the hexapeptide Tyr-Val-Ile-Pro-Ile-Asp. After being excised from the precursor peptide, the core peptides are cyclized and modified post-translationally by enzymes encoded within the gene cluster. The timing and order of proteolysis of the phomA precursor and PTMs are still unknown. Two tyrosinase-like enzymes, phomQ1 and phomQ2, catalyze the chlorination and hydroxylation of Tyr, respectively. PhomYb, is proposed to be involved in the construction of the macrocyclic structure. The other 4 ustYa family proteins may be involved in PTMs that generate the unique structure of phomopsin A. PhomYa is required for the hydroxylation of C-beta of Tyr. PhomYc, phomYd, and phomYe are responsible for the biosynthesis of 2,3-dehydroisoleucine (dIle), 2,3-dehydroaspartic acid (dAsp), and 3,4-dehydroproline (dPro), respectively. While dIle formation by phomYc is indispensable for the installation of dAsp by phomYd, the order of the other PTMs have not been elucidated yet. Most of the biosynthetic enzymes likely have broad substrate specificity, and thus, there might be a metabolic grid from a precursor to phomopsin A. The enzyme(s) responsible for the biosynthesis of 3,4-dehydrovaline (dVal) have also not been identified yet. Finally, phomM acts as an S-adenosylmethionine-dependent alpha-N-methyltransferase that catalyzes two successive N-methylation reactions, converting N-desmethyl-phomopsin A to phomopsin A and phomopsin A further to an N,N-dimethylated congener called phomopsin E. The chain is Oligopeptidase PhomG' from Diaporthe leptostromiformis (Lupinosis disease fungus).